Reading from the N-terminus, the 421-residue chain is Testin (421 aa).

The region spanning 92 to 199 (MILTNPVAAK…GDVKLPREMD (108 aa)) is the PET domain. The segment at 133–164 (EKQPVAGSEGAQYRKKQLAKQLPAHDQDPSKC) is disordered. Positions 155 to 164 (PAHDQDPSKC) are enriched in basic and acidic residues. 3 consecutive LIM zinc-binding domains span residues 234-297 (YSCY…CDSE), 299-359 (PRCA…NHAV), and 362-421 (QGCH…KMMS).

The protein belongs to the prickle / espinas / testin family. As to quaternary structure, interacts via LIM domain 1 with ZYX. Interacts (via LIM domain 3) with ENAH and VASP. Interacts with ALKBH4, talin, actin, alpha-actinin, GRIP1 and PXN. Interacts (via LIM domain 2) with ACTL7A (via N-terminus). Heterodimer with ACTL7A; the heterodimer interacts with ENAH to form a heterotrimer.

The protein resides in the cytoplasm. Its subcellular location is the cell junction. The protein localises to the focal adhesion. Functionally, scaffold protein that may play a role in cell adhesion, cell spreading and in the reorganization of the actin cytoskeleton. Plays a role in the regulation of cell proliferation. May act as a tumor suppressor. The chain is Testin (TES) from Neofelis nebulosa (Clouded leopard).